We begin with the raw amino-acid sequence, 579 residues long: MRRPPGDGDSTGEGPGNWGLWGAQESRRLCCVGPDRCGQALLQIGINMMALPGGRHLDSVPLQEQRLHFMQVDSVQRWMEDLKLMTECECMCVLQAKPISLEEDTQGDLILAGGPGPGDPLQLLLKRGWVISTELRRIGQKLAQDRWARVHSMSVRLTCHARSMVSEYSTISRTASQEMGQAEKLLMEKCSELSAVTERCLQVENEHVLKSMKACVSETLSLLGEHFGQLLELALTREVQALVRKIDTSDNIYITESTTGNLFGLTQEGAPLCRIIAKEGGVVALFKVCRQDSFRCLYPQALRTLASICCVEEGVHQLEKVDGILCLADILTDESHSEATRAEAAAVVAQVTSPHLSFTQHLTSFLENMEEIVTALIKLCQEASSGEVFLLASAALANITFFDKMACEMLLQLNAIRVLLEACGDKQRVDTPYTRDQIVTILANMSVLEQCGSDIIQENGVQLIMGMLSEKPRSGTPAEVAACERVQQKAAVTLARLCRDPDVAQEAVRLSCMSRLIELCRSPSERNSSDAVLVACLAALRRLAGVCPEGLQDSDFQQLVQPRLVDSFLLCSNMEESFV.

Residues 74-89 (SVQRWMEDLKLMTECE) are important for interaction with GPSM2. Positions 576-579 (ESFV) match the PDZ-binding motif.

In terms of assembly, interacts with ALS2CR19/PAR3B and GPSM1/AGS3. Interacts with F2RL2/PAR3. Interacts with GPSM2/LGN (via TPR repeat region). Expressed in brain, kidney, liver, testis and skin.

It is found in the cytoplasm. It localises to the cell cortex. Its function is as follows. May function as an adapter linking the Par3 complex to the GPSM1/GPSM2 complex. Involved in spindle orientation during mitosis. May regulate cell proliferation and differentiation in the developing nervous system. May play a role in the asymmetric division of fibroblasts and participate in the process of stratification of the squamous epithelium. In Mus musculus (Mouse), this protein is Protein inscuteable homolog (Insc).